The chain runs to 179 residues: Guanosine-3',5'-bis(diphosphate) 3'-pyrophosphohydrolase MESH1 (179 aa).

G2 carries the post-translational modification N-acetylglycine. K25 carries the post-translational modification N6-acetyllysine. Residues 32–127 (YINHPIGVAR…VKLADKLYNL (96 aa)) form the HD domain. 3 residues coordinate Mn(2+): H35, H61, and D62. Active-site nucleophile residues include E65 and D66. N6-acetyllysine is present on K97. D122 is a Mn(2+) binding site. K123 bears the N6-acetyllysine mark.

It belongs to the MESH1 family. Mn(2+) is required as a cofactor.

The enzyme catalyses guanosine 3',5'-bis(diphosphate) + H2O = GDP + diphosphate + H(+). Functionally, ppGpp hydrolyzing enzyme involved in starvation response. The protein is Guanosine-3',5'-bis(diphosphate) 3'-pyrophosphohydrolase MESH1 (Hddc3) of Mus musculus (Mouse).